The chain runs to 96 residues: ESAT-6-like protein EsxH (96 aa).

Positions 14, 70, 76, and 77 each coordinate Zn(2+).

Belongs to the WXG100 family. ESAT-6 subfamily. In terms of assembly, forms a tight 1:1 complex with EsxG. When it is complexed to EsxG, interacts directly with host HGS/HRS.

Its subcellular location is the secreted. Its function is as follows. EsxH, in complex with EsxG, disrupts ESCRT function and impairs host phagosome maturation, thereby promoting intracellular bacterial growth. The complex acts by interacting, via EsxH, with the host hepatocyte growth factor-regulated tyrosine kinase substrate (HGS/HRS), a component of the ESCRT machinery. The protein is ESAT-6-like protein EsxH of Mycobacterium tuberculosis (strain ATCC 25618 / H37Rv).